An 89-amino-acid chain; its full sequence is Defensin-like protein 108 (89 aa).

The N-terminal stretch at 1 to 20 (MTSLIAFLFTVLVIVSSVHC) is a signal peptide. Cystine bridges form between cysteine 39–cysteine 81, cysteine 49–cysteine 71, cysteine 57–cysteine 79, and cysteine 61–cysteine 80.

Belongs to the DEFL family.

It localises to the secreted. This chain is Defensin-like protein 108 (LCR51), found in Arabidopsis thaliana (Mouse-ear cress).